Here is a 367-residue protein sequence, read N- to C-terminus: Heparan sulfate glucosamine 3-O-sulfotransferase 2 (367 aa).

The Cytoplasmic segment spans residues 1–19 (MAYRVLGRAGPPQPRRARR). Residues 20-39 (LLFAFTLSLSCTYLCYSFLC) form a helical; Signal-anchor for type II membrane protein membrane-spanning segment. Residues 40–367 (CCDGLGQSRL…ETVGQDFRWE (328 aa)) are Lumenal-facing. The tract at residues 66–115 (LLAKSRPCDPPGPTPSEPSAPSAPAAAAPAPRLSGSNHSGSPKPGTKRLP) is disordered. Pro residues predominate over residues 73 to 83 (CDPPGPTPSEP). Residues 84–96 (SAPSAPAAAAPAP) show a composition bias toward low complexity. N-linked (GlcNAc...) asparagine glycosylation is present at N102. 124–128 (KGGTR) is a 3'-phosphoadenylyl sulfate binding site. Substrate is bound by residues 146–152 (EPHFFDR) and 177–180 (KTPS). N193 is a glycosylation site (N-linked (GlcNAc...) asparagine). 3'-phosphoadenylyl sulfate contacts are provided by R205 and S213. N235 carries an N-linked (GlcNAc...) asparagine glycan. 245 to 246 (WN) serves as a coordination point for substrate. N306 is a glycosylation site (N-linked (GlcNAc...) asparagine). Cysteines 313 and 325 form a disulfide. 3'-phosphoadenylyl sulfate is bound at residue 330 to 334 (KGRTH).

This sequence belongs to the sulfotransferase 1 family.

The protein resides in the golgi apparatus membrane. The catalysed reaction is alpha-D-glucosaminyl-[heparan sulfate](n) + 3'-phosphoadenylyl sulfate = 3-sulfo-alpha-D-glucosaminyl-[heparan sulfate](n) + adenosine 3',5'-bisphosphate + H(+). Sulfotransferase that utilizes 3'-phospho-5'-adenylyl sulfate (PAPS) to catalyze the transfer of a sulfo group to an N-unsubstituted glucosamine linked to a 2-O-sulfo iduronic acid unit on heparan sulfate. Catalyzes the O-sulfation of glucosamine in GlcA2S-GlcNS. Unlike HS3ST1/3-OST-1, does not convert non-anticoagulant heparan sulfate to anticoagulant heparan sulfate. This Mus musculus (Mouse) protein is Heparan sulfate glucosamine 3-O-sulfotransferase 2 (Hs3st2).